A 343-amino-acid polypeptide reads, in one-letter code: Phenylalanine--tRNA ligase alpha subunit (343 aa).

Glu-268 contacts Mg(2+).

This sequence belongs to the class-II aminoacyl-tRNA synthetase family. Phe-tRNA synthetase alpha subunit type 1 subfamily. As to quaternary structure, tetramer of two alpha and two beta subunits. It depends on Mg(2+) as a cofactor.

It is found in the cytoplasm. It catalyses the reaction tRNA(Phe) + L-phenylalanine + ATP = L-phenylalanyl-tRNA(Phe) + AMP + diphosphate + H(+). This Cupriavidus necator (strain ATCC 17699 / DSM 428 / KCTC 22496 / NCIMB 10442 / H16 / Stanier 337) (Ralstonia eutropha) protein is Phenylalanine--tRNA ligase alpha subunit.